A 197-amino-acid chain; its full sequence is Pyridoxal 5'-phosphate synthase subunit PdxT (197 aa).

52 to 54 (GES) is a binding site for L-glutamine. Residue Cys83 is the Nucleophile of the active site. L-glutamine contacts are provided by residues Arg115 and 142–143 (IR). Active-site charge relay system residues include His178 and Glu180.

The protein belongs to the glutaminase PdxT/SNO family. As to quaternary structure, in the presence of PdxS, forms a dodecamer of heterodimers. Only shows activity in the heterodimer.

The enzyme catalyses aldehydo-D-ribose 5-phosphate + D-glyceraldehyde 3-phosphate + L-glutamine = pyridoxal 5'-phosphate + L-glutamate + phosphate + 3 H2O + H(+). It carries out the reaction L-glutamine + H2O = L-glutamate + NH4(+). It participates in cofactor biosynthesis; pyridoxal 5'-phosphate biosynthesis. Catalyzes the hydrolysis of glutamine to glutamate and ammonia as part of the biosynthesis of pyridoxal 5'-phosphate. The resulting ammonia molecule is channeled to the active site of PdxS. The protein is Pyridoxal 5'-phosphate synthase subunit PdxT of Korarchaeum cryptofilum (strain OPF8).